A 505-amino-acid chain; its full sequence is 4-trimethylaminobutyraldehyde dehydrogenase (505 aa).

Residues Lys191 and 243–247 each bind NAD(+); that span reads GSVPT. Catalysis depends on Glu265, which acts as the Proton acceptor. Cys299 functions as the Nucleophile in the catalytic mechanism. Glu402 is an NAD(+) binding site.

This sequence belongs to the aldehyde dehydrogenase family. In terms of assembly, homotetramer. As to expression, constitutively expressed in all organs tested: brain, eye, gill, GI, heart, liver, kidney, muscle, skin, testis and ovary.

It localises to the cytoplasm. The protein resides in the cytosol. The catalysed reaction is 4-(trimethylamino)butanal + NAD(+) + H2O = 4-(trimethylamino)butanoate + NADH + 2 H(+). It carries out the reaction an aldehyde + NAD(+) + H2O = a carboxylate + NADH + 2 H(+). Its pathway is amine and polyamine biosynthesis; carnitine biosynthesis. In terms of biological role, converts gamma-trimethylaminobutyraldehyde into gamma-butyrobetaine with high efficiency (in vitro). Can catalyze the irreversible oxidation of a broad range of aldehydes to the corresponding acids in an NAD-dependent reaction, but with low efficiency. The chain is 4-trimethylaminobutyraldehyde dehydrogenase (aldh9A1) from Oryzias latipes (Japanese rice fish).